The chain runs to 190 residues: dCTP deaminase (190 aa).

Residues 113 to 118, 137 to 139, glutamine 158, tyrosine 172, and glutamine 182 each bind dCTP; these read KSTYAR and TLE. The active-site Proton donor/acceptor is the glutamate 139.

This sequence belongs to the dCTP deaminase family. In terms of assembly, homotrimer.

The enzyme catalyses dCTP + H2O + H(+) = dUTP + NH4(+). The protein operates within pyrimidine metabolism; dUMP biosynthesis; dUMP from dCTP (dUTP route): step 1/2. Functionally, catalyzes the deamination of dCTP to dUTP. The sequence is that of dCTP deaminase from Chromobacterium violaceum (strain ATCC 12472 / DSM 30191 / JCM 1249 / CCUG 213 / NBRC 12614 / NCIMB 9131 / NCTC 9757 / MK).